We begin with the raw amino-acid sequence, 187 residues long: MSRIGKKPIPVPRGVEVTITEENRVTVKGPKGTLSQQFSPEMLITHENGVITVARPSDDKRHRALHGLTRSLIANMVTGVTEGYQRILEITGIGYRAAREGKNLVLQVGFSHPIRVTPPEGITFEVLERRSANEPQQVIIRGIDKQKVGEEAAKLRALRPPEPYKGYGIKYRDERIRRKAGKAGKAR.

Belongs to the universal ribosomal protein uL6 family. As to quaternary structure, part of the 50S ribosomal subunit.

This protein binds to the 23S rRNA, and is important in its secondary structure. It is located near the subunit interface in the base of the L7/L12 stalk, and near the tRNA binding site of the peptidyltransferase center. This is Large ribosomal subunit protein uL6 from Roseiflexus sp. (strain RS-1).